Reading from the N-terminus, the 344-residue chain is Uroporphyrinogen decarboxylase (344 aa).

Substrate-binding positions include 23–27, D73, Y149, T204, and H321; that span reads RQAGR.

This sequence belongs to the uroporphyrinogen decarboxylase family. Homodimer.

It localises to the cytoplasm. It carries out the reaction uroporphyrinogen III + 4 H(+) = coproporphyrinogen III + 4 CO2. Its pathway is porphyrin-containing compound metabolism; protoporphyrin-IX biosynthesis; coproporphyrinogen-III from 5-aminolevulinate: step 4/4. Functionally, catalyzes the decarboxylation of four acetate groups of uroporphyrinogen-III to yield coproporphyrinogen-III. This chain is Uroporphyrinogen decarboxylase, found in Francisella philomiragia subsp. philomiragia (strain ATCC 25017 / CCUG 19701 / FSC 153 / O#319-036).